The primary structure comprises 270 residues: tRNA pseudouridine synthase A (270 aa).

Aspartate 51 serves as the catalytic Nucleophile. Substrate is bound at residue tyrosine 109.

It belongs to the tRNA pseudouridine synthase TruA family. Homodimer.

It catalyses the reaction uridine(38/39/40) in tRNA = pseudouridine(38/39/40) in tRNA. Functionally, formation of pseudouridine at positions 38, 39 and 40 in the anticodon stem and loop of transfer RNAs. In Burkholderia multivorans (strain ATCC 17616 / 249), this protein is tRNA pseudouridine synthase A.